The following is a 589-amino-acid chain: Proline--tRNA ligase (589 aa).

This sequence belongs to the class-II aminoacyl-tRNA synthetase family. ProS type 1 subfamily. In terms of assembly, homodimer.

It is found in the cytoplasm. It catalyses the reaction tRNA(Pro) + L-proline + ATP = L-prolyl-tRNA(Pro) + AMP + diphosphate. Functionally, catalyzes the attachment of proline to tRNA(Pro) in a two-step reaction: proline is first activated by ATP to form Pro-AMP and then transferred to the acceptor end of tRNA(Pro). As ProRS can inadvertently accommodate and process non-cognate amino acids such as alanine and cysteine, to avoid such errors it has two additional distinct editing activities against alanine. One activity is designated as 'pretransfer' editing and involves the tRNA(Pro)-independent hydrolysis of activated Ala-AMP. The other activity is designated 'posttransfer' editing and involves deacylation of mischarged Ala-tRNA(Pro). The misacylated Cys-tRNA(Pro) is not edited by ProRS. The sequence is that of Proline--tRNA ligase from Corynebacterium aurimucosum (strain ATCC 700975 / DSM 44827 / CIP 107346 / CN-1) (Corynebacterium nigricans).